The chain runs to 262 residues: Adenosylcobinamide-GDP ribazoletransferase (262 aa).

Transmembrane regions (helical) follow at residues 11-31 (LNLF…SWVI), 43-63 (YFGL…WFTQ), 66-86 (LPTS…TGGF), 121-141 (AIVL…LALF), 146-166 (AITG…SLIF), and 199-219 (IFVL…SLWA).

This sequence belongs to the CobS family. Requires Mg(2+) as cofactor.

It is found in the cell inner membrane. It catalyses the reaction alpha-ribazole + adenosylcob(III)inamide-GDP = adenosylcob(III)alamin + GMP + H(+). The enzyme catalyses alpha-ribazole 5'-phosphate + adenosylcob(III)inamide-GDP = adenosylcob(III)alamin 5'-phosphate + GMP + H(+). It functions in the pathway cofactor biosynthesis; adenosylcobalamin biosynthesis; adenosylcobalamin from cob(II)yrinate a,c-diamide: step 7/7. Its function is as follows. Joins adenosylcobinamide-GDP and alpha-ribazole to generate adenosylcobalamin (Ado-cobalamin). Also synthesizes adenosylcobalamin 5'-phosphate from adenosylcobinamide-GDP and alpha-ribazole 5'-phosphate. The chain is Adenosylcobinamide-GDP ribazoletransferase from Shewanella denitrificans (strain OS217 / ATCC BAA-1090 / DSM 15013).